Reading from the N-terminus, the 518-residue chain is Cytochrome P450 monooxygenase COX1 (518 aa).

The chain crosses the membrane as a helical span at residues 7 to 25; sequence VLIALSSIVVAYFVKTALA. N-linked (GlcNAc...) asparagine glycosylation is found at Asn48, Asn100, Asn292, Asn302, and Asn351. Residue Cys450 coordinates heme. The N-linked (GlcNAc...) asparagine glycan is linked to Asn457.

The protein belongs to the cytochrome P450 family. It depends on heme as a cofactor.

It localises to the membrane. It functions in the pathway secondary metabolite biosynthesis. Cytochrome P450 monooxygenase; part of the gene cluster that mediates the biosynthesis of alpha-cuprenene and oxidized derivatives. The alpha-cuprenene synthase COP6 is the only sesquiterpene synthase identified in C.cinereus that appears to be part of a biosynthetic gene cluster and is highly specific since it catalyzes the cyclization of (2E,6E)-farnesyl diphosphate into only one product, alpha-cuprenene. The cytochrome P450 monooxygenase COX2 then oxidizes the cyclohexadiene ring of alpha-cuprenene at positions 1 and 4, yielding first alpha-cuparene, followed by alpha-cuparophenol and a further yet unidentified compound resulting from one additional oxidation step. The cytochrome P450 monooxygenase COX1 then likely catalyzes the oxidation at position 9 of the pentane ring of alpha-cuprenene to give the corresponding hydroxy or ketone derivatives. The protein is Cytochrome P450 monooxygenase COX1 of Coprinopsis cinerea (strain Okayama-7 / 130 / ATCC MYA-4618 / FGSC 9003) (Inky cap fungus).